We begin with the raw amino-acid sequence, 396 residues long: Chalcone synthase (396 aa).

Cys-169 is a catalytic residue.

The protein belongs to the thiolase-like superfamily. Chalcone/stilbene synthases family.

It catalyses the reaction (E)-4-coumaroyl-CoA + 3 malonyl-CoA + 3 H(+) = 2',4,4',6'-tetrahydroxychalcone + 3 CO2 + 4 CoA. Its pathway is secondary metabolite biosynthesis; flavonoid biosynthesis. Its function is as follows. The primary product of this enzyme is 4,2',4',6'-tetrahydroxychalcone (also termed naringenin-chalcone or chalcone) which can under specific conditions spontaneously isomerize into naringenin. This Pinus sylvestris (Scotch pine) protein is Chalcone synthase (CHS).